A 492-amino-acid polypeptide reads, in one-letter code: Asparagine--tRNA ligase, mitochondrial (492 aa).

This sequence belongs to the class-II aminoacyl-tRNA synthetase family.

It is found in the mitochondrion matrix. The catalysed reaction is tRNA(Asn) + L-asparagine + ATP = L-asparaginyl-tRNA(Asn) + AMP + diphosphate + H(+). Catalyzes the attachment of asparagine to tRNA(Asn) in the mitochondrion. In Saccharomyces cerevisiae (strain ATCC 204508 / S288c) (Baker's yeast), this protein is Asparagine--tRNA ligase, mitochondrial (SLM5).